The chain runs to 273 residues: Suppressor protein STM1 (273 aa).

Positions 1–153 are disordered; that stretch reads MSNPFDLLGN…PKTAQLSLQD (153 aa). Ser-2 is subject to N-acetylserine. Phosphoserine; by MTOR occurs at positions 32, 41, and 45. Lys-46 participates in a covalent cross-link: Glycyl lysine isopeptide (Lys-Gly) (interchain with G-Cter in ubiquitin). A phosphoserine; by MTOR mark is found at Ser-55 and Ser-73. At Ser-55 the chain carries Phosphoserine. Composition is skewed to basic and acidic residues over residues 60-77, 89-104, and 111-124; these read AIRDKTAGRRNNRSKDVT, RATDRHSRTGKTDTKK, and GDDKKELSAEKEAQ. Phosphoserine is present on Ser-118. Glycyl lysine isopeptide (Lys-Gly) (interchain with G-Cter in ubiquitin) cross-links involve residues Lys-121 and Lys-171. A Phosphothreonine; by MTOR modification is found at Thr-181. A Glycyl lysine isopeptide (Lys-Gly) (interchain with G-Cter in ubiquitin) cross-link involves residue Lys-184. Thr-218 bears the Phosphothreonine; by MTOR mark. Residues 219 to 273 are disordered; sequence RKNFGDRNNNSRNNFNNRRGGRGARKGNNTANATNSANTVQKNRNIDVSNLPSLA. 2 stretches are compositionally biased toward low complexity: residues 224-236 and 244-257; these read DRNNNSRNNFNNR and KGNNTANATNSANT. Ser-229 bears the Phosphoserine mark. Residues 258–273 show a composition bias toward polar residues; sequence VQKNRNIDVSNLPSLA.

This sequence belongs to the SERBP1-HABP4 family. As to quaternary structure, associates with mature 80S ribosomes. Binds to the head domain of the 40S ribosomal subunit and prevents mRNA binding by inserting its alpha-helix domain towards the mRNA entry tunnel at the decoding site, where it blocks the binding of tRNA and mRNA at the A- and P-sites. Interacts with EFT1; interaction sequesters EFT1 at the A-site of the ribosome, thereby blocking the interaction sites of the mRNA-tRNA complex, promoting ribosome stabilization and hibernation. Interacts with CDC13. Associates with the telomere-proximal Y' element. In terms of processing, phosphorylation by TORC1 upon nutrient replenishment inhibits STM1 and causes its release from dormant ribosomes.

The protein localises to the cytoplasm. The protein resides in the nucleus. It is found in the perinuclear region. Ribosome preservation factor that protect a small pool of nontranslating, vacant ribosomes in cells under nutrient starvation conditions. Under nutrient-limiting conditions, cells reduce ribosome biogenesis and degrade ribosomes via autophagy (ribophagy) or proteasomal degradation. To avoid excessive degradation during starvation, STM1 binds to and protects 80S ribosomes from proteasomal degradation. Under nutrient-sufficient conditions, TORC1 phosphorylates and inhibits STM1 to prevent formation of dormant 80S ribosomes. Acts as an inhibitor of mRNA translation by promoting ribosome hibernation: clamps the two ribosomal subunits, thereby preventing their dissociation, and inhibits translation by excluding mRNA-binding. Acts via its association with eEF2 (EFT1), promoting ribosome stabilization and storage in an inactive state. May also repress translation by preventing association of eEF3 (YEF3 and HEF3) with ribosomes. Binds specifically G4 quadruplex (these are four-stranded right-handed helices, stabilized by guanine base quartets) and purine motif triplex (characterized by a third, antiparallel purine-rich DNA strand located within the major groove of a homopurine stretch of duplex DNA) nucleic acid structures. These structures may be present at telomeres or in rRNAs. Acts with CDC13 to control telomere length homeostasis. Involved in the control of the apoptosis-like cell death. The sequence is that of Suppressor protein STM1 from Saccharomyces cerevisiae (strain ATCC 204508 / S288c) (Baker's yeast).